The primary structure comprises 70 residues: Large ribosomal subunit protein eL38 (70 aa).

It belongs to the eukaryotic ribosomal protein eL38 family.

This chain is Large ribosomal subunit protein eL38 (rpl-38), found in Caenorhabditis elegans.